We begin with the raw amino-acid sequence, 342 residues long: Phosphate acyltransferase (342 aa).

Belongs to the PlsX family. In terms of assembly, homodimer. Probably interacts with PlsY.

The protein resides in the cytoplasm. It carries out the reaction a fatty acyl-[ACP] + phosphate = an acyl phosphate + holo-[ACP]. It functions in the pathway lipid metabolism; phospholipid metabolism. Functionally, catalyzes the reversible formation of acyl-phosphate (acyl-PO(4)) from acyl-[acyl-carrier-protein] (acyl-ACP). This enzyme utilizes acyl-ACP as fatty acyl donor, but not acyl-CoA. This Shewanella sp. (strain ANA-3) protein is Phosphate acyltransferase.